We begin with the raw amino-acid sequence, 395 residues long: Multiple organellar RNA editing factor 8, chloroplastic/mitochondrial (395 aa).

The transit peptide at 1 to 56 directs the protein to the chloroplast and mitochondrion; that stretch reads MATHTISRSILCRPAKSLSFLFTRSFASSAPLAKSPASSLLSRSRPLVAAFSSVFR. Basic and acidic residues predominate over residues 211–236; that stretch reads ANERNRRNDRPRNNDRSRNFERRREN. The segment at 211-395 is disordered; it reads ANERNRRNDR…RDGSGNPYQG (185 aa). Residues 240–300 are compositionally biased toward pro residues; the sequence is GPPPQRPPMG…GPRHPPPYGA (61 aa). Residues 313–334 are compositionally biased toward low complexity; it reads QNYGGTPPPNYGGAPPANNMGG. Pro residues predominate over residues 335–355; that stretch reads APPPNYGGGPPPQYGAVPPPQ. The segment covering 356–385 has biased composition (low complexity); it reads YGGAPPQNNNYQQQGSGMQQPQYQNNYPPN.

It belongs to the MORF family. In terms of assembly, interacts with protoporphyrinogen oxidase 1 PPOX1. Interacts with PCMP-H52/MEF10. Homodimer and heterodimers with MORF1/RIP8, MORF2/RIP2, MORF3/RIP3, MORF4/RIP4, MORF5/RIP5, MORF6/RIP6 and MORF7/RIP7. Interacts with RBG3/ORRM3. Interacts with PCMP-A2/PMD1. Interacts with ORRM1 and VAT3/OZ1. Interacts with PCMP-H13/MEF35. Interacts with RBG5/ORRM4. Interacts with ORRM6.

The protein resides in the mitochondrion. It is found in the plastid. It localises to the chloroplast. Its function is as follows. Involved in organellar RNA editing. Required for the processing of numerous RNA editing sites in mitochondria and plastids. Binds to the plastid RARE1 factor, a pentatricopeptide repeat-containing protein involved in RNA editing. The sequence is that of Multiple organellar RNA editing factor 8, chloroplastic/mitochondrial from Arabidopsis thaliana (Mouse-ear cress).